Here is a 202-residue protein sequence, read N- to C-terminus: FMN reductase (NADH) RutF (202 aa).

Residues 168 to 191 (PRAPRGGSAPAEPARGARAIGARP) show a composition bias toward low complexity. Residues 168–202 (PRAPRGGSAPAEPARGARAIGARPPEGPVLALRSA) are disordered.

Belongs to the non-flavoprotein flavin reductase family. RutF subfamily.

The catalysed reaction is FMNH2 + NAD(+) = FMN + NADH + 2 H(+). In terms of biological role, catalyzes the reduction of FMN to FMNH2 which is used to reduce pyrimidine by RutA via the Rut pathway. This Methylorubrum populi (strain ATCC BAA-705 / NCIMB 13946 / BJ001) (Methylobacterium populi) protein is FMN reductase (NADH) RutF.